Here is a 1108-residue protein sequence, read N- to C-terminus: Activity-dependent neuroprotector homeobox protein (1108 aa).

Residues 1–685 are binds to beta-catenin/CTNNB1; it reads MFQLPVNNLG…ASTITLHLVH (685 aa). Glycyl lysine isopeptide (Lys-Gly) (interchain with G-Cter in SUMO2) cross-links involve residues K39 and K72. The C2H2-type 1; degenerate zinc finger occupies 74-97; it reads FCCSACPFSSKFFSAYKSHFRNVH. The residue at position 98 (S98) is a Phosphoserine. The segment at 107–129 adopts a C2H2-type 2; degenerate zinc-finger fold; it reads LNCPYCTFNADKKTLETHIKIFH. The tract at residues 133–154 is disordered; the sequence is SSAPSSSLSTFKDKNKNDGLKP. The span at 143–154 shows a compositional bias: basic and acidic residues; that stretch reads FKDKNKNDGLKP. Glycyl lysine isopeptide (Lys-Gly) (interchain with G-Cter in SUMO2) cross-links involve residues K144 and K155. A C2H2-type 3; degenerate zinc finger spans residues 165–188; that stretch reads YYCKKCTYRDPLYEIVRKHIYREH. Residues K203, K231, K266, K274, K278, K279, K311, and K335 each participate in a glycyl lysine isopeptide (Lys-Gly) (interchain with G-Cter in SUMO2) cross-link. The C2H2-type 4; degenerate zinc-finger motif lies at 221-244; it reads IHCKRCLFMPKSYEALVQHVIEDH. Asymmetric dimethylarginine is present on R348. Residues 354–361 are neuroprotective peptide; contributes to CTNNB1-binding, but less effective than whole N-terminal region; it reads NAPVSIPQ. The interval 360-438 is disordered; the sequence is PQQSQSVKQL…PAATGPPPSN (79 aa). Residues K367 and K407 each participate in a glycyl lysine isopeptide (Lys-Gly) (interchain with G-Cter in SUMO2) cross-link. The segment covering 393–422 has biased composition (polar residues); that stretch reads SLQTANTSLPPGQVKSPSVSQSQASRVLGQ. S408 and S412 each carry phosphoserine. K426 participates in a covalent cross-link: Glycyl lysine isopeptide (Lys-Gly) (interchain with G-Cter in SUMO2). The span at 426–437 shows a compositional bias: pro residues; the sequence is KPPPAATGPPPS. The C2H2-type 5; atypical zinc-finger motif lies at 446-468; the sequence is KICTICNELFPENVYSVHFEKEH. 2 consecutive C2H2-type zinc fingers follow at residues 488–509 and 511–534; these read SKCL…MLIH and LSCP…RMVH. Glycyl lysine isopeptide (Lys-Gly) (interchain with G-Cter in SUMO2) cross-links involve residues K599 and K605. A Phosphoserine modification is found at S607. Glycyl lysine isopeptide (Lys-Gly) (interchain with G-Cter in SUMO2) cross-links involve residues K615, K620, K631, and K657. A C2H2-type 8; atypical zinc finger spans residues 621–646; that stretch reads TLCPLCFSILKGPISDALAHHLRERH. The C2H2-type 9; atypical zinc-finger motif lies at 661–685; the sequence is YKCIHCLGVYTSNMTASTITLHLVH. The disordered stretch occupies residues 690–711; sequence GKTQNGQDKTNAPSRLNQSPGL. A compositionally biased stretch (polar residues) spans 691-709; the sequence is KTQNGQDKTNAPSRLNQSP. Residue K698 forms a Glycyl lysine isopeptide (Lys-Gly) (interchain with G-Cter in SUMO2) linkage. The residue at position 708 (S708) is a Phosphoserine. Residues K715, K727, and K730 each participate in a glycyl lysine isopeptide (Lys-Gly) (interchain with G-Cter in SUMO2) cross-link. S737 bears the Phosphoserine mark. K744 is covalently cross-linked (Glycyl lysine isopeptide (Lys-Gly) (interchain with G-Cter in SUMO2)). A DNA-binding region (homeobox) is located at residues 753-813; that stretch reads LDPKGHEDDS…SNKRKKCVRD (61 aa). S804 carries the post-translational modification Phosphoserine. Glycyl lysine isopeptide (Lys-Gly) (interchain with G-Cter in SUMO2) cross-links involve residues K806, K828, and K834. Residues 851–880 are compositionally biased toward basic and acidic residues; sequence KDSRVNASKTVDKKHNLGKEDDSFSDSFEH. Residues 851–1037 are disordered; that stretch reads KDSRVNASKT…DTEQLKWKNS (187 aa). Phosphoserine is present on residues S875, S877, S885, S888, and S904. Residues K913, K928, and K941 each participate in a glycyl lysine isopeptide (Lys-Gly) (interchain with G-Cter in SUMO2) cross-link. Residues 928–938 show a composition bias toward acidic residues; sequence KEEEEEEEEED. A compositionally biased stretch (basic and acidic residues) spans 939–959; the sequence is GSKYETIHLTEEPAKLMHDAS. 2 positions are modified to phosphoserine: S959 and S961. Residues 977 to 988 are compositionally biased toward polar residues; sequence PSESGPGSQQIS. Residue K1022 forms a Glycyl lysine isopeptide (Lys-Gly) (interchain with G-Cter in SUMO2) linkage. Residues K1041 and K1048 each carry the N6-acetyllysine; alternate modification. Glycyl lysine isopeptide (Lys-Gly) (interchain with G-Cter in SUMO2); alternate cross-links involve residues K1041 and K1048. The segment at 1050 to 1108 is disordered; the sequence is QSQWENASENAERLPNPQIEWQNSTIDSEDGEQFDSMTDGVADPMHGSLTGVKLSSQQA. Position 1077 is a phosphoserine (S1077).

Interacts (via N-terminal region) with beta-catenin/CTNNB1 (via the central armadillo domains); interaction is direct and stabilizes CTNNB1 by modulating its phosphorylation by glycogen synthase kinase-3 beta GSK3B. As to expression, expressed in the brain, with a higher expression in cerebellum and hippocampus. Weakly expressed in lung, kidney and intestine, and expressed at intermediate level in testis.

It is found in the nucleus. The protein resides in the chromosome. Its function is as follows. May be involved in transcriptional regulation. May mediate some of the neuroprotective peptide VIP-associated effects involving normal growth and cancer proliferation. Positively modulates WNT-beta-catenin/CTNN1B signaling, acting by regulating phosphorylation of, and thereby stabilizing, CTNNB1. May be required for neural induction and neuronal differentiation. May be involved in erythroid differentiation. This chain is Activity-dependent neuroprotector homeobox protein (Adnp), found in Mus musculus (Mouse).